Consider the following 792-residue polypeptide: Coiled-coil domain-containing protein R3HCC1L (792 aa).

The tract at residues 7-27 (RCRVRARRPDMALYVPKARRG) is EJC-binding motif; may mediate interaction with the EJC. 2 disordered regions span residues 32 to 61 (KTGD…QKEV) and 527 to 567 (EFKT…TSHT). Residue Ser-688 is modified to Phosphoserine. Thr-712 carries the post-translational modification Phosphothreonine. A coiled-coil region spans residues 751 to 783 (RSKQSKTEREAELKKLQEARERKRLEAKQREDI). The interval 772–792 (RKRLEAKQREDIWEGRDQSTV) is disordered.

In terms of assembly, may interact with the exon junction complex (EJC) composed at least of CASC3, EIF4A3, MAGOH and RBM8A. Expressed in placenta.

The chain is Coiled-coil domain-containing protein R3HCC1L (R3HCC1L) from Homo sapiens (Human).